The primary structure comprises 460 residues: Bifunctional protein GlmU (460 aa).

Positions 1–229 are pyrophosphorylase; sequence MTNYAIILAA…FNESLGVNDR (229 aa). Residues 8–11, lysine 22, glutamine 72, and 77–78 each bind UDP-N-acetyl-alpha-D-glucosamine; these read LAAG and GT. A Mg(2+)-binding site is contributed by aspartate 102. UDP-N-acetyl-alpha-D-glucosamine-binding residues include glycine 139, glutamate 154, asparagine 169, and asparagine 227. Asparagine 227 contributes to the Mg(2+) binding site. The segment at 230–250 is linker; it reads VALATAETVMRQRITQKHMVN. An N-acetyltransferase region spans residues 251 to 460; it reads GVTFQNPETV…RLAHHPSRSK (210 aa). Positions 332 and 350 each coordinate UDP-N-acetyl-alpha-D-glucosamine. The active-site Proton acceptor is the histidine 362. Tyrosine 365 and asparagine 376 together coordinate UDP-N-acetyl-alpha-D-glucosamine. Acetyl-CoA-binding positions include alanine 379, 385–386, serine 404, alanine 422, and arginine 439; that span reads NY.

It in the N-terminal section; belongs to the N-acetylglucosamine-1-phosphate uridyltransferase family. In the C-terminal section; belongs to the transferase hexapeptide repeat family. As to quaternary structure, homotrimer. Requires Mg(2+) as cofactor.

Its subcellular location is the cytoplasm. It catalyses the reaction alpha-D-glucosamine 1-phosphate + acetyl-CoA = N-acetyl-alpha-D-glucosamine 1-phosphate + CoA + H(+). The catalysed reaction is N-acetyl-alpha-D-glucosamine 1-phosphate + UTP + H(+) = UDP-N-acetyl-alpha-D-glucosamine + diphosphate. It participates in nucleotide-sugar biosynthesis; UDP-N-acetyl-alpha-D-glucosamine biosynthesis; N-acetyl-alpha-D-glucosamine 1-phosphate from alpha-D-glucosamine 6-phosphate (route II): step 2/2. Its pathway is nucleotide-sugar biosynthesis; UDP-N-acetyl-alpha-D-glucosamine biosynthesis; UDP-N-acetyl-alpha-D-glucosamine from N-acetyl-alpha-D-glucosamine 1-phosphate: step 1/1. It functions in the pathway bacterial outer membrane biogenesis; LPS lipid A biosynthesis. Its function is as follows. Catalyzes the last two sequential reactions in the de novo biosynthetic pathway for UDP-N-acetylglucosamine (UDP-GlcNAc). The C-terminal domain catalyzes the transfer of acetyl group from acetyl coenzyme A to glucosamine-1-phosphate (GlcN-1-P) to produce N-acetylglucosamine-1-phosphate (GlcNAc-1-P), which is converted into UDP-GlcNAc by the transfer of uridine 5-monophosphate (from uridine 5-triphosphate), a reaction catalyzed by the N-terminal domain. The polypeptide is Bifunctional protein GlmU (Streptococcus pyogenes serotype M28 (strain MGAS6180)).